The sequence spans 362 residues: uncharacterized protein (362 aa).

Positions 314–323 (GEEKEPKQES) are enriched in basic and acidic residues. The segment at 314 to 362 (GEEKEPKQESQEQLFNPFTIDEMLTEEQQQQQEEENNATEEEGDTVKLG) is disordered. Positions 345–356 (QEEENNATEEEG) are enriched in acidic residues.

This is an uncharacterized protein from Acidianus two-tailed virus (ATV).